A 696-amino-acid polypeptide reads, in one-letter code: Probable E3 ubiquitin ligase complex SCF subunit sconB (696 aa).

Basic and acidic residues predominate over residues 1-12 (MDAHELSFRDGH). Residues 1 to 72 (MDAHELSFRD…HSFNTQKPIR (72 aa)) form a disordered region. The span at 55–69 (PGSTQDKPHSFNTQK) shows a compositional bias: polar residues. In terms of domain architecture, F-box spans 193-239 (IDFLTALPPEISFKILCYLDTTSLCKAAQVSRRWRALADDDVVWHRM). The segment at 290 to 314 (SATIETAAAGSKRKPESGKEDTAMV) is disordered. Residues 302 to 313 (RKPESGKEDTAM) show a composition bias toward basic and acidic residues. WD repeat units lie at residues 365–402 (GHSNGIMCLQFEDNILATGSYDATIKIWDTETGEELRT), 405–444 (GHQSGIRCLQFDDTKLISGSMDHTLKVWNWRTGECISTYS), 446–482 (HRGGVVGLHFDATILASGSVDKTVKIWNFEDKSTCLL), 484–525 (GHTD…RTFH), 579–622 (DTPS…CLRT), 623–662 (FFGHLEGVWALAADTLRIVSGAEDRMVKIWDPRTGKCERT), and 665–696 (GHSGPVTCIGLGDSRFATGSEDCEVRMYSFQT). A disordered region spans residues 554-596 (NVSVTSGDSPAASPQALPGFDGQTSDTPSSAFGPAFDDGRPSP).

It belongs to the WD repeat MET30/SCONB/SCON-2 family. Component of the SCF(sconB) E3 ubiquitin ligase complex.

Its pathway is protein modification; protein ubiquitination. Its function is as follows. Component of the SCF(sconB) E3 ubiquitin ligase complex involved in the regulation of sulfur metabolite repression, probably by mediating the inactivation or degradation of the metR transcription factor. The protein is Probable E3 ubiquitin ligase complex SCF subunit sconB (sconB) of Aspergillus fumigatus (strain ATCC MYA-4609 / CBS 101355 / FGSC A1100 / Af293) (Neosartorya fumigata).